A 424-amino-acid polypeptide reads, in one-letter code: Phosphoribosylamine--glycine ligase (424 aa).

In terms of domain architecture, ATP-grasp spans Lys-111–Lys-312. Ile-137–Ser-189 serves as a coordination point for ATP.

It belongs to the GARS family.

The enzyme catalyses 5-phospho-beta-D-ribosylamine + glycine + ATP = N(1)-(5-phospho-beta-D-ribosyl)glycinamide + ADP + phosphate + H(+). It functions in the pathway purine metabolism; IMP biosynthesis via de novo pathway; N(1)-(5-phospho-D-ribosyl)glycinamide from 5-phospho-alpha-D-ribose 1-diphosphate: step 2/2. This chain is Phosphoribosylamine--glycine ligase (purD), found in Helicobacter pylori (strain J99 / ATCC 700824) (Campylobacter pylori J99).